The chain runs to 111 residues: Nucleoid-associated protein glr3498 (111 aa).

It belongs to the YbaB/EbfC family. In terms of assembly, homodimer.

The protein resides in the cytoplasm. It localises to the nucleoid. In terms of biological role, binds to DNA and alters its conformation. May be involved in regulation of gene expression, nucleoid organization and DNA protection. This chain is Nucleoid-associated protein glr3498, found in Gloeobacter violaceus (strain ATCC 29082 / PCC 7421).